Reading from the N-terminus, the 88-residue chain is Small ribosomal subunit protein uS17 (88 aa).

This sequence belongs to the universal ribosomal protein uS17 family. As to quaternary structure, part of the 30S ribosomal subunit.

Functionally, one of the primary rRNA binding proteins, it binds specifically to the 5'-end of 16S ribosomal RNA. This Syntrophotalea carbinolica (strain DSM 2380 / NBRC 103641 / GraBd1) (Pelobacter carbinolicus) protein is Small ribosomal subunit protein uS17.